Here is a 497-residue protein sequence, read N- to C-terminus: Beta-glucosidase 8 (497 aa).

The N-terminal stretch at 1 to 22 (MKHFNLLSIILVIVLATSYIDA) is a signal peptide. Residue Gln42 participates in a beta-D-glucoside binding. The N-linked (GlcNAc...) asparagine glycan is linked to Asn65. A beta-D-glucoside contacts are provided by residues His139 and 184–185 (NE). Glu185 functions as the Proton donor in the catalytic mechanism. The N-linked (GlcNAc...) asparagine glycan is linked to Asn202. Tyr319 contributes to the a beta-D-glucoside binding site. N-linked (GlcNAc...) asparagine glycosylation is present at Asn354. A beta-D-glucoside-binding residues include Glu387, Trp430, and Phe446. Residue Glu387 is the Nucleophile of the active site. Asn452, Asn474, and Asn490 each carry an N-linked (GlcNAc...) asparagine glycan.

It belongs to the glycosyl hydrolase 1 family.

The catalysed reaction is Hydrolysis of terminal, non-reducing beta-D-glucosyl residues with release of beta-D-glucose.. This is Beta-glucosidase 8 from Arabidopsis thaliana (Mouse-ear cress).